We begin with the raw amino-acid sequence, 862 residues long: Transcription initiation factor TFIID subunit 4B (862 aa).

The segment at 100–241 (NTTTIQFPAN…TPSNEPNLKA (142 aa)) is sufficient for interaction with ZNF628. The span at 219 to 237 (VTTLKPSSLGASSTPSNEP) shows a compositional bias: polar residues. Positions 219–239 (VTTLKPSSLGASSTPSNEPNL) are disordered. In terms of domain architecture, TAFH spans 256-353 (LENVKKCKNF…CVQQTSSDMV (98 aa)). Residues 511 to 533 (PGPVLSQPAGIPQAVQVKQLVVQ) form a required for interaction with P65/RELA region. The Nuclear export signal signature appears at 516 to 556 (SQPAGIPQAVQVKQLVVQQPSGGNEKQVTTISHSSTLTIQK). Ser-595 is modified (phosphoserine). The region spanning 653 to 702 (PFLFIGALQKRILDIGKKHDITELNSDAVNLISQATQERLRGLLEKLTAI) is the Histone-fold domain. A coiled-coil region spans residues 722–787 (TRSQLKFLEK…LAQIQHRDAN (66 aa)). The interval 830-862 (PRITRICLRDLIFCMEQEREMKYSRALYLALLK) is required for interaction with TAF12.

The protein belongs to the TAF4 family. As to quaternary structure, TFIID is composed of TATA binding protein (TBP) and a number of TBP-associated factors (TAFs). Heterodimerizes with TAF12/TFII20 via the C-terminal H2A-like histone-fold domain. This heterodimer forms a histone-like octamer with the TAF6/TAFII70-TAF9/TAFII31 heterodimer. Interacts with P65/RELA homodimers and P65/RELA-REL heterodimers. Interaction with POU2AF1, via its C-terminal activation domain, is required for octamer-dependent transcription. Interacts with ZNF628. Post-translationally, under stimulation by forskolin, Isoform 1 is phosphorylated by protein kinase A (PKA). As to expression, preferentially expressed in ovarian granulosa cells (at protein level). Highly expressed in B-cells.

Its subcellular location is the nucleus. It is found in the cytoplasm. Cell type-specific subunit of the general transcription factor TFIID that may function as a gene-selective coactivator in certain cells. TFIID is a multimeric protein complex that plays a central role in mediating promoter responses to various activators and repressors. TAF4B is a transcriptional coactivator of the p65/RELA NF-kappa-B subunit. Involved in the activation of a subset of antiapoptotic genes including TNFAIP3. May be involved in regulating folliculogenesis. Through interaction with OCBA/POU2AF1, acts as a coactivator of B-cell-specific transcription. Plays a role in spermiogenesis and oogenesis. This chain is Transcription initiation factor TFIID subunit 4B (TAF4B), found in Homo sapiens (Human).